The chain runs to 209 residues: Casparian strip membrane protein 1 (209 aa).

Residues 1-35 (MKTGESTAIDIAPETNNSGPIGKKKSTTPLLAAPV) are disordered. Over 1–46 (MKTGESTAIDIAPETNNSGPIGKKKSTTPLLAAPVPDRGTHRMKRG) the chain is Cytoplasmic. The chain crosses the membrane as a helical span at residues 47–67 (LAIFDFVLRIGVLASALAAAA). Over 68 to 96 (AMGTSEQTLPFFTQFFQFEASYDDLPTFQ) the chain is Extracellular. The chain crosses the membrane as a helical span at residues 97-117 (FFVVAMAVVAGYVVLSIPFSI). Topologically, residues 118–129 (VCIIRPHAAGPR) are cytoplasmic. A helical membrane pass occupies residues 130 to 150 (VLLLILDSVALTLNTAAAGAA). The Extracellular portion of the chain corresponds to 151–182 (AAVVSLAHSGNSSTNWLAICNQFGDFCQQASG). N-linked (GlcNAc...) asparagine glycosylation is present at Asn161. Residues 183–203 (AVVGSFAAVLLFLLLILFSAL) form a helical membrane-spanning segment. The Cytoplasmic portion of the chain corresponds to 204-209 (SLKNSH).

The protein belongs to the Casparian strip membrane proteins (CASP) family. As to quaternary structure, homodimer and heterodimers.

It is found in the cell membrane. In terms of biological role, regulates membrane-cell wall junctions and localized cell wall deposition. Required for establishment of the Casparian strip membrane domain (CSD) and the subsequent formation of Casparian strips, a cell wall modification of the root endodermis that determines an apoplastic barrier between the intraorganismal apoplasm and the extraorganismal apoplasm and prevents lateral diffusion. This Cucumis melo (Muskmelon) protein is Casparian strip membrane protein 1.